The following is a 349-amino-acid chain: Phosphoribosylformylglycinamidine cyclo-ligase (349 aa).

Belongs to the AIR synthase family.

It localises to the cytoplasm. The catalysed reaction is 2-formamido-N(1)-(5-O-phospho-beta-D-ribosyl)acetamidine + ATP = 5-amino-1-(5-phospho-beta-D-ribosyl)imidazole + ADP + phosphate + H(+). It participates in purine metabolism; IMP biosynthesis via de novo pathway; 5-amino-1-(5-phospho-D-ribosyl)imidazole from N(2)-formyl-N(1)-(5-phospho-D-ribosyl)glycinamide: step 2/2. In Bordetella avium (strain 197N), this protein is Phosphoribosylformylglycinamidine cyclo-ligase.